Reading from the N-terminus, the 351-residue chain is Anaerobic nitrite reductase Glb1-2 (351 aa).

Globin domains lie at Asp13–Lys162 and Cys184–Lys333. 12 residues coordinate heme b: Ser56, Lys70, His74, Lys104, Thr108, His109, Ser227, Lys241, His245, Lys275, Thr279, and His280. Positions Glu331–Ser351 are disordered.

The protein belongs to the plant globin family. As to quaternary structure, monomer. Heme b is required as a cofactor. Predominantly expressed in nodules and roots, and, to a lesser extent, in leaves, at low levels in pods, but barely in stems, petioles, buds and flowers. As to expression, mainly expressed in nodules and roots at low levels, and barely in leaves. In terms of tissue distribution, expressed at very low levels in nodules, roots and pods.

The protein resides in the cytoplasm. The protein localises to the nucleus. The catalysed reaction is Fe(III)-heme b-[protein] + nitric oxide + H2O = Fe(II)-heme b-[protein] + nitrite + 2 H(+). Functionally, phytoglobin that regulates the fine tuning of nitric oxide (NO) concentration in the cytosol in response to sudden changes in O(2) availability, and performs both symbiotic and nonsymbiotic functions. Exhibits NO dioxygenase activity in the presence of O(2) but nitrite reductase (NiR) activity in the absence of O(2) (e.g. during flooding or in waterlogged soil). May not function as an oxygen storage or transport protein. Extremely reactive toward the physiological ligands O(2), nitric oxide (NO), and nitrite with a very high affinity for O(2) through an hexacoordinate heme iron because of a very low dissociation constant. In terms of biological role, very high affinity for O(2) through two hexacoordinate heme irons. Extremely reactive toward the physiological ligands O(2), nitric oxide (NO), and nitrite. Its function is as follows. Very high affinity for O(2) through a single hexacoordinate heme iron. Extremely reactive toward the physiological ligands O(2), nitric oxide (NO), and nitrite. This Medicago truncatula (Barrel medic) protein is Anaerobic nitrite reductase Glb1-2.